The chain runs to 127 residues: Protein NEGATIVE REGULATOR OF RESISTANCE (127 aa).

2 disordered regions span residues 1–28 (MDAT…VDEV) and 47–127 (TRRL…RAPA). A compositionally biased stretch (low complexity) spans 112–127 (PPSDAPATPRSARAPA).

The protein belongs to the NPR1-interactor family. Interacts with NPR1/NH1. Interacts with NPR3/NH3.

It localises to the nucleus. In terms of biological role, acts as a negative regulator of disease resistance. Acts on basal resistance, age-related resistance and resistance mediated by the LRR receptor kinase XA21. Plants over-expressing NRR display enhanced susceptibility to the bacterial blight Xanthomonas oryzae pv. oryzae (Xoo). Binds to and represses NPR1/NH1-mediated transcriptional activation of LG2 in vitro. This Oryza sativa subsp. japonica (Rice) protein is Protein NEGATIVE REGULATOR OF RESISTANCE.